A 540-amino-acid polypeptide reads, in one-letter code: NADH-quinone oxidoreductase subunit N 1 (540 aa).

13 helical membrane-spanning segments follow: residues 11-31 (ILPE…DVLT), 52-72 (AVGL…LFTV), 109-129 (FTMI…LLAM), 142-162 (ALLI…EFIL), 195-215 (FLFG…TYGF), 250-270 (LILG…VVPF), 284-306 (PVTA…RLLT), 324-344 (WTSI…LAAL), 352-372 (LLAY…LLWA), 386-406 (LIYY…VLAV), 431-451 (LMMT…GFWA), 464-486 (AVPL…LRFL), and 508-528 (AAII…NLIW).

Belongs to the complex I subunit 2 family. In terms of assembly, NDH-1 is composed of 14 different subunits. Subunits NuoA, H, J, K, L, M, N constitute the membrane sector of the complex.

The protein localises to the cell membrane. It catalyses the reaction a quinone + NADH + 5 H(+)(in) = a quinol + NAD(+) + 4 H(+)(out). NDH-1 shuttles electrons from NADH, via FMN and iron-sulfur (Fe-S) centers, to quinones in the respiratory chain. The immediate electron acceptor for the enzyme in this species is believed to be ubiquinone. Couples the redox reaction to proton translocation (for every two electrons transferred, four hydrogen ions are translocated across the cytoplasmic membrane), and thus conserves the redox energy in a proton gradient. This is NADH-quinone oxidoreductase subunit N 1 from Roseiflexus castenholzii (strain DSM 13941 / HLO8).